The chain runs to 254 residues: 3-deoxy-manno-octulosonate cytidylyltransferase (254 aa).

The protein belongs to the KdsB family.

The protein resides in the cytoplasm. The enzyme catalyses 3-deoxy-alpha-D-manno-oct-2-ulosonate + CTP = CMP-3-deoxy-beta-D-manno-octulosonate + diphosphate. Its pathway is nucleotide-sugar biosynthesis; CMP-3-deoxy-D-manno-octulosonate biosynthesis; CMP-3-deoxy-D-manno-octulosonate from 3-deoxy-D-manno-octulosonate and CTP: step 1/1. It participates in bacterial outer membrane biogenesis; lipopolysaccharide biosynthesis. Its function is as follows. Activates KDO (a required 8-carbon sugar) for incorporation into bacterial lipopolysaccharide in Gram-negative bacteria. This chain is 3-deoxy-manno-octulosonate cytidylyltransferase, found in Chlamydia felis (strain Fe/C-56) (Chlamydophila felis).